The chain runs to 263 residues: Small ribosomal subunit protein eS1 (263 aa).

The segment covering 236 to 254 has biased composition (basic and acidic residues); sequence GDGKGGSDEPGARVDRPEG. Positions 236 to 263 are disordered; the sequence is GDGKGGSDEPGARVDRPEGYEPPVQETV.

This sequence belongs to the eukaryotic ribosomal protein eS1 family. Component of the small ribosomal subunit. Mature ribosomes consist of a small (40S) and a large (60S) subunit. The 40S subunit contains about 33 different proteins and 1 molecule of RNA (18S). The 60S subunit contains about 49 different proteins and 3 molecules of RNA (28S, 5.8S and 5S).

The protein resides in the cytoplasm. The protein is Small ribosomal subunit protein eS1 of Periplaneta americana (American cockroach).